The sequence spans 252 residues: UPF0714 protein YndL (252 aa).

Residues 33-51 (IVKLLMIFMVFTPISSIYA) traverse the membrane as a helical segment.

This sequence belongs to the UPF0714 family.

The protein resides in the cell membrane. The sequence is that of UPF0714 protein YndL (yndL) from Bacillus subtilis (strain 168).